Consider the following 256-residue polypeptide: Putative ankyrin repeat protein FPV231 (256 aa).

ANK repeat units follow at residues 1–20 (MFGN…RIDS), 24–53 (EECL…DTNI), 57–86 (YNRS…DYNL), 90–119 (HGYT…DPNI), and 123–151 (EKHT…DINI).

This chain is Putative ankyrin repeat protein FPV231, found in Vertebrata (FPV).